The primary structure comprises 1057 residues: Carbamoyl phosphate synthase large chain (1057 aa).

Residues 1–401 (MPKRNDIKTI…SLLKAIRSLE (401 aa)) are carboxyphosphate synthetic domain. ATP-binding residues include Arg129, Arg169, Gly175, Gly176, Lys208, Ile210, Glu215, Gly241, Ile242, His243, Gln284, and Glu298. The 195-residue stretch at 133-327 (RTLMNYLNVP…IAKLAAKIAV (195 aa)) folds into the ATP-grasp 1 domain. Residues Gln284, Glu298, and Asn300 each coordinate Mg(2+). Positions 284, 298, and 300 each coordinate Mn(2+). Residues 402-546 (YGVHHLGLPN…YGTYETENES (145 aa)) form an oligomerization domain region. A carbamoyl phosphate synthetic domain region spans residues 547–929 (IITDKEKILV…ALFKGLTGSG (383 aa)). Residues 671 to 861 (EALLRKINVP…MAQLAMRAII (191 aa)) enclose the ATP-grasp 2 domain. The ATP site is built by Arg707, Arg746, Leu748, Glu752, Gly777, Val778, His779, Ser780, Gln820, and Glu832. Mg(2+) is bound by residues Gln820, Glu832, and Asn834. Residues Gln820, Glu832, and Asn834 each coordinate Mn(2+). One can recognise an MGS-like domain in the interval 930-1057 (VEVKDHGTVL…ESMTFTMRQM (128 aa)). Residues 930-1057 (VEVKDHGTVL…ESMTFTMRQM (128 aa)) form an allosteric domain region.

The protein belongs to the CarB family. As to quaternary structure, composed of two chains; the small (or glutamine) chain promotes the hydrolysis of glutamine to ammonia, which is used by the large (or ammonia) chain to synthesize carbamoyl phosphate. Tetramer of heterodimers (alpha,beta)4. Mg(2+) is required as a cofactor. It depends on Mn(2+) as a cofactor.

The enzyme catalyses hydrogencarbonate + L-glutamine + 2 ATP + H2O = carbamoyl phosphate + L-glutamate + 2 ADP + phosphate + 2 H(+). The catalysed reaction is hydrogencarbonate + NH4(+) + 2 ATP = carbamoyl phosphate + 2 ADP + phosphate + 2 H(+). The protein operates within amino-acid biosynthesis; L-arginine biosynthesis; carbamoyl phosphate from bicarbonate: step 1/1. It participates in pyrimidine metabolism; UMP biosynthesis via de novo pathway; (S)-dihydroorotate from bicarbonate: step 1/3. Functionally, large subunit of the glutamine-dependent carbamoyl phosphate synthetase (CPSase). CPSase catalyzes the formation of carbamoyl phosphate from the ammonia moiety of glutamine, carbonate, and phosphate donated by ATP, constituting the first step of 2 biosynthetic pathways, one leading to arginine and/or urea and the other to pyrimidine nucleotides. The large subunit (synthetase) binds the substrates ammonia (free or transferred from glutamine from the small subunit), hydrogencarbonate and ATP and carries out an ATP-coupled ligase reaction, activating hydrogencarbonate by forming carboxy phosphate which reacts with ammonia to form carbamoyl phosphate. The protein is Carbamoyl phosphate synthase large chain of Staphylococcus aureus (strain bovine RF122 / ET3-1).